Reading from the N-terminus, the 345-residue chain is MSSKGVISVLVIDDSAHNRRTLSTMLESEPDVRVVDRAADGEEGLKKVVDLKPDVVTLDLEMPKLGGYTFLRLLMRTAPTPVIVISSYSHRSDVFKALELGAFDFIAKPQHPTFEAMEALRVELLEKVRAARHVRPGYRHAAPGARAMAVAGEPPLVVAVGASTGGPPAVQRVLEGLAVEPTPCVLVCQHMPPQFTRAFADRLDRIGPFSVTEARDGDLVQPGHVYIAPGGRHMVVAERGSRLELQTPPPTPVDKYAPCVDRLFVSMAQVLGAKALGVVLTGMGADGAEGARAVHRAGGEVWAQSEETSVVFGMPGEAIATGAVKRVIPLGDIGPALAALARRRR.

The region spanning 8 to 123 (SVLVIDDSAH…FEAMEALRVE (116 aa)) is the Response regulatory domain. Asp-59 is modified (4-aspartylphosphate). The CheB-type methylesterase domain maps to 151 to 344 (AGEPPLVVAV…PALAALARRR (194 aa)). Catalysis depends on residues Ser-163, His-190, and Asp-286.

This sequence belongs to the CheB family. Phosphorylated by CheA. Phosphorylation of the N-terminal regulatory domain activates the methylesterase activity.

The protein localises to the cytoplasm. The enzyme catalyses [protein]-L-glutamate 5-O-methyl ester + H2O = L-glutamyl-[protein] + methanol + H(+). It carries out the reaction L-glutaminyl-[protein] + H2O = L-glutamyl-[protein] + NH4(+). Its function is as follows. Involved in chemotaxis. Part of a chemotaxis signal transduction system that modulates chemotaxis in response to various stimuli. Catalyzes the demethylation of specific methylglutamate residues introduced into the chemoreceptors (methyl-accepting chemotaxis proteins or MCP) by CheR. Also mediates the irreversible deamidation of specific glutamine residues to glutamic acid. The protein is Protein-glutamate methylesterase/protein-glutamine glutaminase 1 of Myxococcus xanthus (strain DK1622).